A 396-amino-acid polypeptide reads, in one-letter code: Dimethyladenosine transferase 2, mitochondrial (396 aa).

Residues 1–43 constitute a mitochondrion transit peptide; that stretch reads MRGPAMRLPPRIALSALARGPSCILGSGAATRKDWQTRNRRGF. Positions 43 to 71 are disordered; sequence FSDFNIEPLPDSDLEESSPWTSRNRSEPT. 3 residues coordinate S-adenosyl-L-methionine: Ile-74, Glu-123, and Asp-149. Residues 328–329 form a DNA-binding region; the sequence is KR.

The protein belongs to the class I-like SAM-binding methyltransferase superfamily. rRNA adenine N(6)-methyltransferase family. KsgA subfamily. In terms of assembly, homodimer. Component of the mitochondrial transcription initiation complex, composed at least of TFB2M, TFAM and POLRMT. In this complex TFAM recruits POLRMT to the promoter whereas TFB2M induces structural changes in POLRMT to enable promoter opening and trapping of the DNA non-template strand. Interacts with mitochondrial RNA polymerase POLRMT. Interacts with TFAM. As to expression, ubiquitously expressed.

It localises to the mitochondrion. It catalyses the reaction adenosine in rRNA + S-adenosyl-L-methionine = N(6)-methyladenosine in rRNA + S-adenosyl-L-homocysteine + H(+). S-adenosyl-L-methionine-dependent rRNA methyltransferase which may methylate two specific adjacent adenosines in the loop of a conserved hairpin near the 3'-end of 12S mitochondrial rRNA. Component of the mitochondrial transcription initiation complex, composed at least of TFB2M, TFAM and POLRMT that is required for basal transcription of mitochondrial DNA. In this complex, TFAM recruits POLRMT to a specific promoter whereas TFB2M induces structural changes in POLRMT to enable promoter opening and trapping of the DNA non-template strand. Stimulates transcription independently of the methyltransferase activity. The protein is Dimethyladenosine transferase 2, mitochondrial of Mus musculus (Mouse).